A 499-amino-acid chain; its full sequence is Spore germination protein GerQA (499 aa).

The next 3 helical transmembrane spans lie at 285 to 305 (LFAFIFSVLTTPLYVSILTYH), 376 to 396 (SNVLIIIVALSALSSFTAPIY), and 409 to 429 (FIISAHLLGLLGIVLTSSLLL).

The protein belongs to the GerABKA family.

The protein localises to the membrane. Functionally, required for the germination response to inosine. Has no role in L-alanine germination. The sequence is that of Spore germination protein GerQA (gerQA) from Bacillus cereus.